We begin with the raw amino-acid sequence, 2406 residues long: Highly reducing polyketide synthase dmxL2 (2406 aa).

Residues 1 to 399 form the Ketosynthase family 3 (KS3) domain; it reads MEAFWSASKK…GTNAHAVLDD (399 aa). Cys-130 is an active-site residue. Residue Cys-130 is the For beta-ketoacyl synthase activity of the active site. Positions 414-476 are disordered; the sequence is GHASNGTNGT…GPTDGPTSRP (63 aa). The span at 417-448 shows a compositional bias: polar residues; sequence SNGTNGTLTNGHILNGEHTSNGMNGTLTNGHA. Positions 574-911 are malonyl-CoA:ACP transacylase (MAT) domain; that stretch reads FVFTGQGAQW…LAGSLFTQGY (338 aa). Catalysis depends on Ser-665, which acts as the For malonyltransferase activity. Residues 962-1096 form an N-terminal hotdog fold region; sequence PSLLGSPSPS…GLLVIEYEAA (135 aa). In terms of domain architecture, PKS/mFAS DH spans 962–1278; the sequence is PSLLGSPSPS…CAEIAGASSN (317 aa). Residues 964-1273 form a dehydratase (DH) domain region; that stretch reads LLGSPSPSLA…IEGFLCAEIA (310 aa). His-994 functions as the Proton acceptor; for dehydratase activity in the catalytic mechanism. Residues 1124–1278 are C-terminal hotdog fold; that stretch reads VHRLDPSGFY…CAEIAGASSN (155 aa). Catalysis depends on Asp-1189, which acts as the Proton donor; for dehydratase activity. An enoylreductase (ER) domain region spans residues 1694–2006; it reads GMLGSVCLEP…TGKHLGKIAL (313 aa). Residues 2032 to 2210 are ketoreductase (KR) domain; that stretch reads GVYLLVGGLG…TTVDLGIMRD (179 aa). The region spanning 2318-2395 is the Carrier domain; it reads EASDSVLEAL…TFCNRIAAKS (78 aa). The residue at position 2355 (Ser-2355) is an O-(pantetheine 4'-phosphoryl)serine.

It functions in the pathway secondary metabolite biosynthesis. Its function is as follows. Highly reducing polyketide synthase; part of the gene cluster that mediates the biosynthesis of the dimeric xanthones cryptosporioptides. The pathway begins with the synthesis of atrochrysone thioester by the polyketide synthase dmx-nrPKS. The atrochrysone carboxyl ACP thioesterase dmxR1 then breaks the thioester bond and releases the atrochrysone carboxylic acid from dmx-nrPKS. Atrochrysone carboxylic acid is decarboxylated by the decarboxylase dmxR15, and oxidized by the anthrone oxygenase dmxR16 to yield emodin. Emodin is then reduced to emodin hydroquinone by the oxidoreductase dmxR7. A-ring reduction by the short chain dehydrogenase dmxR18, dehydration by the scytalone dehydratase-like protein dmxR17 and probable spontaneous re-oxidation, results in overall deoxygenation to chrysophanol. Baeyer-Villiger oxidation by the Baeyer-Villiger monooxygenase (BVMO) dmxR6 then yields monodictylactone in equilibrium with monodictyphenone. In the case of the cryptosporioptides biosynthesis, monodictylactone is reduced at C-12 to an alcohol (by the short chain dehydrogenases dmxR12 or dmxR8) and hydroxylated at C-5 by dmxR9, yielding the electron-rich aromatic which could eliminate H(2)O to form the ortho-quinonemethide, followed by tautomerisation to paraquinone and complete the formal reduction to produce the 10-methylgroup. Conjugate addition of C-4a-OH to the resulting paraquinone by the monooxygenase dmxR10 then gives cyclohexadienone, which is then reduced at C-5 by the short chain dehydrogenase dmxR3 to give the dihydroxanthone. The 6,7-epoxide in the cryptosporioptides could be introduced by the cytochrome P450 monooxygenase dmxL3. The highly reducing PKS dmxL2 manufactures butyrate, which is further carboxylated by dmxL1 to form ethylmalonate. It is not yet clear whether the carboxylation occurs while the butyrate is attached to the ACP of dmxL2, but this unusual fungal metabolite could then be esterified to O-5 by the O-acetyltransferase dmxR13. Finally, dimerization performed by dmxR5 gives the observed dimers cryptosporioptides A, B and C as the final products of the pathway. The protein is Highly reducing polyketide synthase dmxL2 of Cryptosporiopsis sp. (strain 8999).